We begin with the raw amino-acid sequence, 875 residues long: cGMP-specific 3',5'-cyclic phosphodiesterase (875 aa).

2 disordered regions span residues 1–29 and 78–102; these read MERA…DQDS and SCSC…RKIS. Positions 10-22 are enriched in low complexity; the sequence is QQRQQQQPQQQKQ. Positions 78–101 are enriched in polar residues; that stretch reads SCSCPLQQSPRADNSAPGTPTRKI. Position 102 is a phosphoserine (Ser102). 2 GAF domains span residues 164–314 and 346–503; these read DVTA…GIVL and SLEV…GLGI. Residues 536-860 form the PDEase domain; the sequence is ETRELQSLAA…QKWQALAEQQ (325 aa). The active-site Proton donor is His613. Residues His617, His653, Asp654, and Asp764 each contribute to the Zn(2+) site. A Mg(2+)-binding site is contributed by Asp654. Gln817 is a 3',5'-cyclic GMP binding site.

It belongs to the cyclic nucleotide phosphodiesterase family. Requires Zn(2+) as cofactor. Mg(2+) is required as a cofactor. Phosphorylation is regulated by binding of cGMP to the two allosteric sites. Phosphorylation by PRKG1 leads to its activation. As to expression, expressed in aortic smooth muscle cells, heart, placenta, skeletal muscle and pancreas and, to a much lesser extent, in brain, liver and lung.

The catalysed reaction is 3',5'-cyclic GMP + H2O = GMP + H(+). It functions in the pathway purine metabolism; 3',5'-cyclic GMP degradation; GMP from 3',5'-cyclic GMP: step 1/1. Its activity is regulated as follows. Sildenafil (Viagra) is a highly selective and potent inhibitor of PDE5A and is effective in the treatment of penile erectile dysfunction. Also inhibited by zaprinast. Its function is as follows. Plays a role in signal transduction by regulating the intracellular concentration of cyclic nucleotides. This phosphodiesterase catalyzes the specific hydrolysis of cGMP to 5'-GMP. Specifically regulates nitric-oxide-generated cGMP. The polypeptide is cGMP-specific 3',5'-cyclic phosphodiesterase (Homo sapiens (Human)).